An 83-amino-acid polypeptide reads, in one-letter code: U5-theraphotoxin-Hs1a 3 (83 aa).

The signal sequence occupies residues 1–21 (MKTSMFLTLTGLVLLFVVCYA). A propeptide spanning residues 22–49 (SESEEKDFPKELLSSIFAADSDFKVEER) is cleaved from the precursor. 3 disulfide bridges follow: C51–C63, C56–C68, and C62–C75.

The protein belongs to the neurotoxin 10 (Hwtx-1) family. 51 (Hntx-8) subfamily. Hntx-8 sub-subfamily. Expressed by the venom gland.

It is found in the secreted. Functionally, agglutinates erythrocytes. The polypeptide is U5-theraphotoxin-Hs1a 3 (Cyriopagopus schmidti (Chinese bird spider)).